Consider the following 725-residue polypeptide: Phosphoribosylformylglycinamidine synthase subunit PurL (725 aa).

Histidine 42 is an active-site residue. The ATP site is built by tyrosine 45 and lysine 84. Glutamate 86 contributes to the Mg(2+) binding site. Substrate-binding positions include 87–90 (SHNH) and arginine 109. Residue histidine 88 is the Proton acceptor of the active site. Aspartate 110 contacts Mg(2+). Glutamine 237 is a substrate binding site. Aspartate 265 is a Mg(2+) binding site. Substrate is bound at residue 309–311 (ESQ). Positions 491 and 528 each coordinate ATP. Mg(2+) is bound at residue asparagine 529. Substrate is bound at residue serine 531.

It belongs to the FGAMS family. Monomer. Part of the FGAM synthase complex composed of 1 PurL, 1 PurQ and 2 PurS subunits.

It localises to the cytoplasm. The enzyme catalyses N(2)-formyl-N(1)-(5-phospho-beta-D-ribosyl)glycinamide + L-glutamine + ATP + H2O = 2-formamido-N(1)-(5-O-phospho-beta-D-ribosyl)acetamidine + L-glutamate + ADP + phosphate + H(+). Its pathway is purine metabolism; IMP biosynthesis via de novo pathway; 5-amino-1-(5-phospho-D-ribosyl)imidazole from N(2)-formyl-N(1)-(5-phospho-D-ribosyl)glycinamide: step 1/2. Its function is as follows. Part of the phosphoribosylformylglycinamidine synthase complex involved in the purines biosynthetic pathway. Catalyzes the ATP-dependent conversion of formylglycinamide ribonucleotide (FGAR) and glutamine to yield formylglycinamidine ribonucleotide (FGAM) and glutamate. The FGAM synthase complex is composed of three subunits. PurQ produces an ammonia molecule by converting glutamine to glutamate. PurL transfers the ammonia molecule to FGAR to form FGAM in an ATP-dependent manner. PurS interacts with PurQ and PurL and is thought to assist in the transfer of the ammonia molecule from PurQ to PurL. The sequence is that of Phosphoribosylformylglycinamidine synthase subunit PurL from Campylobacter lari (strain RM2100 / D67 / ATCC BAA-1060).